The primary structure comprises 189 residues: dTTP/UTP pyrophosphatase (189 aa).

The Proton acceptor role is filled by Asp64.

Belongs to the Maf family. YhdE subfamily. A divalent metal cation is required as a cofactor.

It is found in the cytoplasm. It carries out the reaction dTTP + H2O = dTMP + diphosphate + H(+). It catalyses the reaction UTP + H2O = UMP + diphosphate + H(+). Nucleoside triphosphate pyrophosphatase that hydrolyzes dTTP and UTP. May have a dual role in cell division arrest and in preventing the incorporation of modified nucleotides into cellular nucleic acids. In Syntrophomonas wolfei subsp. wolfei (strain DSM 2245B / Goettingen), this protein is dTTP/UTP pyrophosphatase.